A 157-amino-acid polypeptide reads, in one-letter code: 2-C-methyl-D-erythritol 2,4-cyclodiphosphate synthase (157 aa).

The a divalent metal cation site is built by Asp8 and His10. 4-CDP-2-C-methyl-D-erythritol 2-phosphate-binding positions include 8 to 10 and 34 to 35; these read DVH and HS. An a divalent metal cation-binding site is contributed by His42. 4-CDP-2-C-methyl-D-erythritol 2-phosphate is bound by residues 56–58, 132–135, Phe139, and Arg142; these read DIG and TTNE.

The protein belongs to the IspF family. Homotrimer. A divalent metal cation serves as cofactor.

It carries out the reaction 4-CDP-2-C-methyl-D-erythritol 2-phosphate = 2-C-methyl-D-erythritol 2,4-cyclic diphosphate + CMP. Its pathway is isoprenoid biosynthesis; isopentenyl diphosphate biosynthesis via DXP pathway; isopentenyl diphosphate from 1-deoxy-D-xylulose 5-phosphate: step 4/6. In terms of biological role, involved in the biosynthesis of isopentenyl diphosphate (IPP) and dimethylallyl diphosphate (DMAPP), two major building blocks of isoprenoid compounds. Catalyzes the conversion of 4-diphosphocytidyl-2-C-methyl-D-erythritol 2-phosphate (CDP-ME2P) to 2-C-methyl-D-erythritol 2,4-cyclodiphosphate (ME-CPP) with a corresponding release of cytidine 5-monophosphate (CMP). This chain is 2-C-methyl-D-erythritol 2,4-cyclodiphosphate synthase, found in Symbiobacterium thermophilum (strain DSM 24528 / JCM 14929 / IAM 14863 / T).